Here is a 215-residue protein sequence, read N- to C-terminus: Leucyl/phenylalanyl-tRNA--protein transferase (215 aa).

Belongs to the L/F-transferase family.

The protein resides in the cytoplasm. The catalysed reaction is N-terminal L-lysyl-[protein] + L-leucyl-tRNA(Leu) = N-terminal L-leucyl-L-lysyl-[protein] + tRNA(Leu) + H(+). It catalyses the reaction N-terminal L-arginyl-[protein] + L-leucyl-tRNA(Leu) = N-terminal L-leucyl-L-arginyl-[protein] + tRNA(Leu) + H(+). The enzyme catalyses L-phenylalanyl-tRNA(Phe) + an N-terminal L-alpha-aminoacyl-[protein] = an N-terminal L-phenylalanyl-L-alpha-aminoacyl-[protein] + tRNA(Phe). Functionally, functions in the N-end rule pathway of protein degradation where it conjugates Leu, Phe and, less efficiently, Met from aminoacyl-tRNAs to the N-termini of proteins containing an N-terminal arginine or lysine. This chain is Leucyl/phenylalanyl-tRNA--protein transferase, found in Campylobacter jejuni subsp. jejuni serotype O:2 (strain ATCC 700819 / NCTC 11168).